The following is a 140-amino-acid chain: Arsenate reductase ArsI2 (140 aa).

C10 (nucleophile; cysteine thioarsenate intermediate) is an active-site residue.

This sequence belongs to the ArsC family.

It carries out the reaction [glutaredoxin]-dithiol + arsenate + glutathione + H(+) = glutathionyl-S-S-[glutaredoxin] + arsenite + H2O. In terms of biological role, catalyzes the reduction of arsenate [As(V)] to arsenite [As(III)]. Does not constitute the major arsenate reductase in cells: essential only in the absence of ArsC (AC P74313). This Synechocystis sp. (strain ATCC 27184 / PCC 6803 / Kazusa) protein is Arsenate reductase ArsI2.